The following is a 137-amino-acid chain: Putative pre-16S rRNA nuclease (137 aa).

It belongs to the YqgF nuclease family.

It localises to the cytoplasm. Functionally, could be a nuclease involved in processing of the 5'-end of pre-16S rRNA. This Buchnera aphidicola subsp. Baizongia pistaciae (strain Bp) protein is Putative pre-16S rRNA nuclease.